The chain runs to 340 residues: DNA-directed RNA polymerase subunit alpha (340 aa).

The tract at residues 1-236 is alpha N-terminal domain (alpha-NTD); the sequence is MLSLSKNWNT…EQLQLFISFE (236 aa). The interval 251-340 is alpha C-terminal domain (alpha-CTD); sequence FSPYLLKRVD…LSKRYEDSYN (90 aa).

The protein belongs to the RNA polymerase alpha chain family. Homodimer. The RNAP catalytic core consists of 2 alpha, 1 beta, 1 beta' and 1 omega subunit. When a sigma factor is associated with the core the holoenzyme is formed, which can initiate transcription.

The enzyme catalyses RNA(n) + a ribonucleoside 5'-triphosphate = RNA(n+1) + diphosphate. Functionally, DNA-dependent RNA polymerase catalyzes the transcription of DNA into RNA using the four ribonucleoside triphosphates as substrates. This Rickettsia africae (strain ESF-5) protein is DNA-directed RNA polymerase subunit alpha.